The sequence spans 112 residues: Transmembrane protein 14 homolog (112 aa).

The chain crosses the membrane as a helical span at residues 3 to 23; the sequence is VDWFGYVYAATVAAGGIMGYA.

This sequence belongs to the TMEM14 family.

Its subcellular location is the membrane. This chain is Transmembrane protein 14 homolog, found in Drosophila melanogaster (Fruit fly).